The following is a 78-amino-acid chain: Short neurotoxin SNTX6 (78 aa).

Positions 1 to 21 (MKTLLLTFLVVTIVCLDLGYT) are cleaved as a signal peptide. 4 disulfide bridges follow: Cys24/Cys40, Cys33/Cys58, Cys62/Cys70, and Cys71/Cys76.

The protein belongs to the three-finger toxin family. Short-chain subfamily. In terms of tissue distribution, expressed by the venom gland.

Its subcellular location is the secreted. This three-finger toxin binds and inhibits the nicotinic acetylcholine receptor (nAChR). The sequence is that of Short neurotoxin SNTX6 from Ophiophagus hannah (King cobra).